The primary structure comprises 272 residues: Merozoite surface protein 2 (272 aa).

A signal peptide spans 1-20 (MKVIKTLSIINFFIFVTFNI). N-linked (GlcNAc...) asparagine glycans are attached at residues asparagine 22 and asparagine 36. A polymorphic region region spans residues 44-198 (AESKPSTGAG…EQTESPELQS (155 aa)). The segment at 45–233 (ESKPSTGAGG…DSQKECTDGN (189 aa)) is disordered. The segment covering 51–82 (GAGGSAGGSAGGSAGGSAGGSAGGSAGSGDGN) has biased composition (gly residues). 6 tandem repeats follow at residues 53-56 (GGSA), 57-60 (GGSA), 61-64 (GGSA), 65-68 (GGSA), 69-72 (GGSA), and 73-76 (GGSA). Positions 53-76 (GGSAGGSAGGSAGGSAGGSAGGSA) are 6 X 4 AA tandem repeats of G-G-S-A. A compositionally biased stretch (low complexity) spans 83-119 (GADAEGSSSTPATTTTTKTTTTTTTTNDAEASTSTSS). Residues 122–137 (PNHKNAETNPKGKGEV) are compositionally biased toward basic and acidic residues. Polar residues-rich tracts occupy residues 139 to 165 (EPNQANKETQNNSNVQQDSQTKSNVPP) and 172 to 200 (KSPTAQPEQAENSAPTAEQTESPELQSAP). The N-linked (GlcNAc...) asparagine glycan is linked to asparagine 149. Asparagine 221 carries an N-linked (GlcNAc...) asparagine glycan. Cysteines 229 and 237 form a disulfide. N-linked (GlcNAc...) asparagine glycosylation is found at asparagine 245 and asparagine 246. Asparagine 246 carries GPI-anchor amidated asparagine lipidation. Residues 247 to 272 (SSNIASINKFVVLISATLVLSFAIFI) constitute a propeptide, removed in mature form.

It localises to the cell membrane. In terms of biological role, may play a role in the merozoite attachment to the erythrocyte. This chain is Merozoite surface protein 2, found in Plasmodium falciparum (isolate 3D7).